The following is a 326-amino-acid chain: Eukaryotic translation initiation factor 3 subunit I (326 aa).

5 WD repeats span residues 8–47, 50–89, 145–184, 188–227, and 285–326; these read GHER…RLGT, GHQG…IIAS, MTES…KVVD, DHAA…CLKT, and GHFG…NIFE.

This sequence belongs to the eIF-3 subunit I family. Component of the eukaryotic translation initiation factor 3 (eIF-3) complex. The eIF-3 complex interacts with pix.

Its subcellular location is the cytoplasm. In terms of biological role, component of the eukaryotic translation initiation factor 3 (eIF-3) complex, which is involved in protein synthesis of a specialized repertoire of mRNAs and, together with other initiation factors, stimulates binding of mRNA and methionyl-tRNAi to the 40S ribosome. The eIF-3 complex specifically targets and initiates translation of a subset of mRNAs involved in cell proliferation. The polypeptide is Eukaryotic translation initiation factor 3 subunit I (Drosophila pseudoobscura pseudoobscura (Fruit fly)).